The primary structure comprises 610 residues: Elongation factor 4 (610 aa).

One can recognise a tr-type G domain in the interval 15–197 (KSIRNFSIIA…RIINDIPYPK (183 aa)). Residues 27 to 32 (DHGKST) and 144 to 147 (NKID) each bind GTP.

This sequence belongs to the TRAFAC class translation factor GTPase superfamily. Classic translation factor GTPase family. LepA subfamily.

Its subcellular location is the cell membrane. It catalyses the reaction GTP + H2O = GDP + phosphate + H(+). Required for accurate and efficient protein synthesis under certain stress conditions. May act as a fidelity factor of the translation reaction, by catalyzing a one-codon backward translocation of tRNAs on improperly translocated ribosomes. Back-translocation proceeds from a post-translocation (POST) complex to a pre-translocation (PRE) complex, thus giving elongation factor G a second chance to translocate the tRNAs correctly. Binds to ribosomes in a GTP-dependent manner. The chain is Elongation factor 4 from Buchnera aphidicola subsp. Acyrthosiphon pisum (strain APS) (Acyrthosiphon pisum symbiotic bacterium).